Consider the following 271-residue polypeptide: Small ribosomal subunit protein uS3 (271 aa).

In terms of domain architecture, KH type-2 spans 40–108 (IRKFLKKRLY…TIIVNIVEVR (69 aa)). The tract at residues 210-271 (PTRDGVNPRE…RPQRTENKGN (62 aa)) is disordered. The segment covering 215-247 (VNPREESRKSDRRDNKRDNRRNDRRGNDRRGND) has biased composition (basic and acidic residues).

The protein belongs to the universal ribosomal protein uS3 family. In terms of assembly, part of the 30S ribosomal subunit. Forms a tight complex with proteins S10 and S14.

Binds the lower part of the 30S subunit head. Binds mRNA in the 70S ribosome, positioning it for translation. This chain is Small ribosomal subunit protein uS3, found in Clostridioides difficile (strain 630) (Peptoclostridium difficile).